The following is a 210-amino-acid chain: Probable GTP-binding protein EngB (210 aa).

In terms of domain architecture, EngB-type G spans 25 to 199 (TGIEVAFAGR…RQKLDTWFSE (175 aa)). GTP is bound by residues 33-40 (GRSNAGKS), 60-64 (GRTQL), 78-81 (DLPG), 145-148 (TKAD), and 178-180 (FSS). Ser40 and Thr62 together coordinate Mg(2+).

It belongs to the TRAFAC class TrmE-Era-EngA-EngB-Septin-like GTPase superfamily. EngB GTPase family. It depends on Mg(2+) as a cofactor.

Necessary for normal cell division and for the maintenance of normal septation. This chain is Probable GTP-binding protein EngB, found in Escherichia coli O6:H1 (strain CFT073 / ATCC 700928 / UPEC).